Consider the following 328-residue polypeptide: E3 ubiquitin-protein ligase SINA-like 5 (328 aa).

The segment at 1–77 is disordered; sequence MARSGGNDGH…GSPKSSQPVK (77 aa). Composition is skewed to acidic residues over residues 10 to 20 and 27 to 62; these read HEEELDPELFE and GYED…ENVT. Over residues 63–77 the composition is skewed to polar residues; the sequence is TDEQSGSPKSSQPVK. Residues 86 to 122 form an RING-type; degenerate zinc finger; it reads CPTCCEPLKRPIYQCSNGHLACSSCCQKLNKKCSFCR. Residues 136–324 are SBD; that stretch reads VIEASIVPCP…MQICIAYGYK (189 aa). The segment at 139–197 adopts an SIAH-type; degenerate zinc-finger fold; the sequence is ASIVPCPNAKHGCKETTTYCNQSSHEKVCKFVRCSCPVSNCNYVSSYSNLKSHACSTAH. Positions 144, 151, 163, 167, 174, 179, 191, and 197 each coordinate Zn(2+).

Belongs to the SINA (Seven in absentia) family.

The enzyme catalyses S-ubiquitinyl-[E2 ubiquitin-conjugating enzyme]-L-cysteine + [acceptor protein]-L-lysine = [E2 ubiquitin-conjugating enzyme]-L-cysteine + N(6)-ubiquitinyl-[acceptor protein]-L-lysine.. It participates in protein modification; protein ubiquitination. In terms of biological role, E3 ubiquitin-protein ligase that mediates ubiquitination and subsequent proteasomal degradation of target proteins. E3 ubiquitin ligases accept ubiquitin from an E2 ubiquitin-conjugating enzyme in the form of a thioester and then directly transfers the ubiquitin to targeted substrates. It probably triggers the ubiquitin-mediated degradation of different substrates. The polypeptide is E3 ubiquitin-protein ligase SINA-like 5 (Arabidopsis thaliana (Mouse-ear cress)).